Reading from the N-terminus, the 302-residue chain is RELT-like protein 2 (302 aa).

A helical membrane pass occupies residues 15–35 (LYMLFLLVLVFFLMGLVGFMI). Disordered stretches follow at residues 47 to 68 (RTSRGSEPDDAQLQPPEDDDVN), 135 to 164 (CSRSKRPPLVRQGRSKEGKGRPRPGETTVF), 177 to 212 (RYGLHEHRDGSPTDRSWGSGGGQEPGVSQVAGGQPR), and 247 to 302 (VPCT…AGGM). Serine 52 is modified (phosphoserine). Basic and acidic residues-rich tracts occupy residues 148-158 (RSKEGKGRPRP) and 177-188 (RYGLHEHRDGSP). The span at 277 to 294 (QEANGQPTKLDTSGQQDS) shows a compositional bias: polar residues.

This sequence belongs to the RELT family. Interacts with RELT, RELL1, OXSR1, PLSCR1 and TRAF2.

It localises to the cell membrane. Functionally, induces activation of MAPK14/p38 cascade, when overexpressed. Induces apoptosis, when overexpressed. The chain is RELT-like protein 2 (Rell2) from Rattus norvegicus (Rat).